A 239-amino-acid polypeptide reads, in one-letter code: 1-(5-phosphoribosyl)-5-[(5-phosphoribosylamino)methylideneamino] imidazole-4-carboxamide isomerase (239 aa).

Asp8 functions as the Proton acceptor in the catalytic mechanism. Residue Asp129 is the Proton donor of the active site.

Belongs to the HisA/HisF family.

It is found in the cytoplasm. It catalyses the reaction 1-(5-phospho-beta-D-ribosyl)-5-[(5-phospho-beta-D-ribosylamino)methylideneamino]imidazole-4-carboxamide = 5-[(5-phospho-1-deoxy-D-ribulos-1-ylimino)methylamino]-1-(5-phospho-beta-D-ribosyl)imidazole-4-carboxamide. It participates in amino-acid biosynthesis; L-histidine biosynthesis; L-histidine from 5-phospho-alpha-D-ribose 1-diphosphate: step 4/9. The polypeptide is 1-(5-phosphoribosyl)-5-[(5-phosphoribosylamino)methylideneamino] imidazole-4-carboxamide isomerase (Bacillus cytotoxicus (strain DSM 22905 / CIP 110041 / 391-98 / NVH 391-98)).